The chain runs to 99 residues: Ferredoxin, vegetative (99 aa).

The 2Fe-2S ferredoxin-type domain maps to 4–96; sequence YQVRLINKKR…DCTIRTHQEP (93 aa). Cys42, Cys47, Cys50, and Cys80 together coordinate [2Fe-2S] cluster.

It belongs to the 2Fe2S plant-type ferredoxin family. [2Fe-2S] cluster serves as cofactor.

Functionally, ferredoxins are iron-sulfur proteins that transfer electrons in a wide variety of metabolic reactions. Donates electrons to the nitrogenase 2. This chain is Ferredoxin, vegetative (fdxH2), found in Trichormus variabilis (strain ATCC 29413 / PCC 7937) (Anabaena variabilis).